The primary structure comprises 106 residues: Movement protein TGB2 (106 aa).

Over 1–9 (MPLTPPPDH) the chain is Cytoplasmic. Residues 10–30 (TKVLLVAAIGLSIVASILTYS) traverse the membrane as a helical segment. Over 31 to 71 (RNTLPQVGDHSHLLPHGGVYKDGTKTIVYGGPRKLNSLEGG) the chain is Lumenal. The chain crosses the membrane as a helical span at residues 72-92 (FNLPVQPWFLVILLSAAIFLL). The Cytoplasmic segment spans residues 93 to 106 (SCRSGHRRVCGQCH).

This sequence belongs to the Tymovirales TGBp2 protein family.

It localises to the host endoplasmic reticulum membrane. In terms of biological role, plays a role in viral cell-to-cell propagation, by facilitating genome transport to neighboring plant cells through plasmosdesmata,. The chain is Movement protein TGB2 from Chrysanthemum morifolium (Florist's daisy).